Here is a 306-residue protein sequence, read N- to C-terminus: Protein-methionine-sulfoxide reductase catalytic subunit MsrP (306 aa).

A signal peptide (tat-type signal) is located at residues 1 to 44 (MLIRHAPDLTDNDVTGHGLYLRRRDFIGGAAGLGLMAAAGSASA). Mo-molybdopterin contacts are provided by residues Asn-69, 72–73 (YE), Cys-127, Thr-162, Asn-210, Arg-215, and 226–228 (GIK).

The protein belongs to the MsrP family. Heterodimer of a catalytic subunit (MsrP) and a heme-binding subunit (MsrQ). It depends on Mo-molybdopterin as a cofactor. In terms of processing, predicted to be exported by the Tat system. The position of the signal peptide cleavage has not been experimentally proven.

It localises to the periplasm. It catalyses the reaction L-methionyl-[protein] + a quinone + H2O = L-methionyl-(S)-S-oxide-[protein] + a quinol. The catalysed reaction is L-methionyl-[protein] + a quinone + H2O = L-methionyl-(R)-S-oxide-[protein] + a quinol. In terms of biological role, part of the MsrPQ system that repairs oxidized periplasmic proteins containing methionine sulfoxide residues (Met-O), using respiratory chain electrons. Thus protects these proteins from oxidative-stress damage caused by reactive species of oxygen and chlorine generated by the host defense mechanisms. MsrPQ is essential for the maintenance of envelope integrity under bleach stress, rescuing a wide series of structurally unrelated periplasmic proteins from methionine oxidation. The catalytic subunit MsrP is non-stereospecific, being able to reduce both (R-) and (S-) diastereoisomers of methionine sulfoxide. This is Protein-methionine-sulfoxide reductase catalytic subunit MsrP from Caulobacter sp. (strain K31).